A 324-amino-acid polypeptide reads, in one-letter code: tRNA U34 carboxymethyltransferase (324 aa).

Carboxy-S-adenosyl-L-methionine-binding positions include K92, W106, K111, G131, 153–155 (DPT), 181–182 (IE), M197, Y201, and R316.

This sequence belongs to the class I-like SAM-binding methyltransferase superfamily. CmoB family. In terms of assembly, homotetramer.

It carries out the reaction carboxy-S-adenosyl-L-methionine + 5-hydroxyuridine(34) in tRNA = 5-carboxymethoxyuridine(34) in tRNA + S-adenosyl-L-homocysteine + H(+). In terms of biological role, catalyzes carboxymethyl transfer from carboxy-S-adenosyl-L-methionine (Cx-SAM) to 5-hydroxyuridine (ho5U) to form 5-carboxymethoxyuridine (cmo5U) at position 34 in tRNAs. This is tRNA U34 carboxymethyltransferase from Methylococcus capsulatus (strain ATCC 33009 / NCIMB 11132 / Bath).